Consider the following 2289-residue polypeptide: DNA polymerase II large subunit (2289 aa).

Disordered regions lie at residues 279 to 330 (IGSD…SPRA) and 544 to 563 (SDTN…NTDD). The span at 292-304 (GEADIVKTDKDTN) shows a compositional bias: basic and acidic residues. Acidic residues predominate over residues 305 to 318 (ESETEDGIDNDDYN). Positions 544-557 (SDTNSASGNTSLRA) are enriched in polar residues. DOD-type homing endonuclease domains follow at residues 1222-1367 (LLGY…RLGI) and 1755-1911 (LLGQ…RLGV).

It belongs to the archaeal DNA polymerase II family. Heterodimer of a large subunit and a small subunit. Post-translationally, this protein undergoes a protein self splicing that involves a post-translational excision of the intervening region (intein) followed by peptide ligation.

It carries out the reaction DNA(n) + a 2'-deoxyribonucleoside 5'-triphosphate = DNA(n+1) + diphosphate. It catalyses the reaction Exonucleolytic cleavage in the 3'- to 5'-direction to yield nucleoside 5'-phosphates.. Functionally, possesses two activities: a DNA synthesis (polymerase) and an exonucleolytic activity that degrades single-stranded DNA in the 3'- to 5'-direction. Has a template-primer preference which is characteristic of a replicative DNA polymerase. The sequence is that of DNA polymerase II large subunit from Haloquadratum walsbyi (strain DSM 16790 / HBSQ001).